Reading from the N-terminus, the 498-residue chain is Cytochrome P450 6B1 (498 aa).

Cys443 serves as a coordination point for heme.

This sequence belongs to the cytochrome P450 family. Heme serves as cofactor. In terms of tissue distribution, midgut microsome.

It localises to the endoplasmic reticulum membrane. The protein localises to the microsome membrane. The catalysed reaction is an organic molecule + reduced [NADPH--hemoprotein reductase] + O2 = an alcohol + oxidized [NADPH--hemoprotein reductase] + H2O + H(+). Enables the insect to feed on furanocoumarin-producing plants and evolved as an adaptation for detoxification of xanthotoxin and other furanocoumarins. This Papilio polyxenes (Black swallowtail butterfly) protein is Cytochrome P450 6B1 (CYP6B1).